A 322-amino-acid chain; its full sequence is Quinolinate synthase (322 aa).

Iminosuccinate-binding residues include His-37 and Ser-54. Residue Cys-99 coordinates [4Fe-4S] cluster. Iminosuccinate contacts are provided by residues 125–127 and Ser-142; that span reads YIN. Cys-185 provides a ligand contact to [4Fe-4S] cluster. Iminosuccinate is bound by residues 211 to 213 and Thr-228; that span reads HPE. Residue Cys-278 participates in [4Fe-4S] cluster binding.

It belongs to the quinolinate synthase family. Type 2 subfamily. Requires [4Fe-4S] cluster as cofactor.

It is found in the cytoplasm. The catalysed reaction is iminosuccinate + dihydroxyacetone phosphate = quinolinate + phosphate + 2 H2O + H(+). Its pathway is cofactor biosynthesis; NAD(+) biosynthesis; quinolinate from iminoaspartate: step 1/1. Catalyzes the condensation of iminoaspartate with dihydroxyacetone phosphate to form quinolinate. The polypeptide is Quinolinate synthase (Prosthecochloris aestuarii (strain DSM 271 / SK 413)).